We begin with the raw amino-acid sequence, 24 residues long: Potassium channel toxin alpha-KTx 6 OcyKTx5 (24 aa).

A disulfide bond links Cys-3 and Cys-24.

The protein belongs to the short scorpion toxin superfamily. Potassium channel inhibitor family. Alpha-KTx 06 subfamily. In terms of tissue distribution, expressed by the venom gland.

It is found in the secreted. Blocks voltage-gated potassium channels. The polypeptide is Potassium channel toxin alpha-KTx 6 OcyKTx5 (Opisthacanthus cayaporum (South American scorpion)).